Consider the following 116-residue polypeptide: Vitelline membrane protein Vm32E (116 aa).

The N-terminal stretch at methionine 1–alanine 17 is a signal peptide. The VM domain occupies glycine 36–threonine 73.

This sequence belongs to the vitelline membrane family. In terms of processing, sulfated by pip; may be involved in embryo dorsal-ventral axis determination. Sulfation by pip may occur on covalently bound glycosaminoglycans. As to expression, expressed in stage 10 egg-chambers, localized in the outer eggshell (chorion membrane).

It localises to the secreted. Major early eggshell protein. The protein is Vitelline membrane protein Vm32E of Drosophila melanogaster (Fruit fly).